The chain runs to 108 residues: MSGSAKYSDWSQVMTLIANAAEQGNHQPLLTMLMTPDEREALVARVNIFHELLQGELSQRQISQLLGVGVATITRGSNELKSHTDEEKVWLMDLLEKSTKNELDVEKE.

The DNA-binding element occupies 59–82; the sequence is QRQISQLLGVGVATITRGSNELKS.

This sequence belongs to the TrpR family. In terms of assembly, homodimer.

The protein resides in the cytoplasm. This protein is an aporepressor. When complexed with L-tryptophan it binds the operator region of the trp operon and prevents the initiation of transcription. The sequence is that of Trp operon repressor homolog from Aliivibrio fischeri (strain MJ11) (Vibrio fischeri).